A 283-amino-acid polypeptide reads, in one-letter code: Probable endonuclease 4 (283 aa).

The Zn(2+) site is built by H69, H113, E148, D182, H185, H217, D230, H232, and E262.

This sequence belongs to the AP endonuclease 2 family. The cofactor is Zn(2+).

The enzyme catalyses Endonucleolytic cleavage to 5'-phosphooligonucleotide end-products.. Functionally, endonuclease IV plays a role in DNA repair. It cleaves phosphodiester bonds at apurinic or apyrimidinic (AP) sites, generating a 3'-hydroxyl group and a 5'-terminal sugar phosphate. This chain is Probable endonuclease 4, found in Bifidobacterium longum (strain DJO10A).